Consider the following 63-residue polypeptide: uncharacterized protein (63 aa).

Residues 38–58 traverse the membrane as a helical segment; it reads ISLFIILHLCLLVCLLLSFYF.

Its subcellular location is the membrane. This is an uncharacterized protein from Saccharomyces cerevisiae (strain ATCC 204508 / S288c) (Baker's yeast).